Consider the following 127-residue polypeptide: Small ribosomal subunit protein uS11 (127 aa).

The protein belongs to the universal ribosomal protein uS11 family. In terms of assembly, part of the 30S ribosomal subunit. Interacts with proteins S7 and S18. Binds to IF-3.

Its function is as follows. Located on the platform of the 30S subunit, it bridges several disparate RNA helices of the 16S rRNA. Forms part of the Shine-Dalgarno cleft in the 70S ribosome. This is Small ribosomal subunit protein uS11 from Rickettsia africae (strain ESF-5).